Reading from the N-terminus, the 87-residue chain is Small ribosomal subunit protein bS20 (87 aa).

The tract at residues 1-22 is disordered; that stretch reads MANIKSQIKRIGTNKKAQERNK.

Belongs to the bacterial ribosomal protein bS20 family.

In terms of biological role, binds directly to 16S ribosomal RNA. The sequence is that of Small ribosomal subunit protein bS20 from Clavibacter sepedonicus (Clavibacter michiganensis subsp. sepedonicus).